A 409-amino-acid chain; its full sequence is Argininosuccinate synthase (409 aa).

Residues 8 to 16 (AYSGGLDTS) and A34 contribute to the ATP site. Y85 serves as a coordination point for L-citrulline. G115 contacts ATP. L-aspartate is bound by residues T117, N121, and D122. L-citrulline is bound at residue N121. Positions 125, 178, 187, 268, and 280 each coordinate L-citrulline.

It belongs to the argininosuccinate synthase family. Type 1 subfamily. Homotetramer.

It is found in the cytoplasm. The enzyme catalyses L-citrulline + L-aspartate + ATP = 2-(N(omega)-L-arginino)succinate + AMP + diphosphate + H(+). Its pathway is amino-acid biosynthesis; L-arginine biosynthesis; L-arginine from L-ornithine and carbamoyl phosphate: step 2/3. The polypeptide is Argininosuccinate synthase (Thermotoga maritima (strain ATCC 43589 / DSM 3109 / JCM 10099 / NBRC 100826 / MSB8)).